A 458-amino-acid polypeptide reads, in one-letter code: tRNA modification GTPase MnmE (458 aa).

Residues R22, E84, and R123 each coordinate (6S)-5-formyl-5,6,7,8-tetrahydrofolate. The TrmE-type G domain occupies 220 to 379; the sequence is GISTAIIGRP…LEKAIADLFF (160 aa). Residue N230 coordinates K(+). GTP is bound by residues 230–235, 249–255, and 274–277; these read NVGKSS, TDIAGTT, and DTAG. S234 serves as a coordination point for Mg(2+). Residues T249, I251, and T254 each coordinate K(+). T255 lines the Mg(2+) pocket. K458 is a binding site for (6S)-5-formyl-5,6,7,8-tetrahydrofolate.

The protein belongs to the TRAFAC class TrmE-Era-EngA-EngB-Septin-like GTPase superfamily. TrmE GTPase family. Homodimer. Heterotetramer of two MnmE and two MnmG subunits. K(+) serves as cofactor.

Its subcellular location is the cytoplasm. Exhibits a very high intrinsic GTPase hydrolysis rate. Involved in the addition of a carboxymethylaminomethyl (cmnm) group at the wobble position (U34) of certain tRNAs, forming tRNA-cmnm(5)s(2)U34. The protein is tRNA modification GTPase MnmE of Bacillus mycoides (strain KBAB4) (Bacillus weihenstephanensis).